A 1063-amino-acid polypeptide reads, in one-letter code: TBC1 domain family member 31 (1063 aa).

WD repeat units lie at residues 33-74, 75-116, 117-157, 158-200, 201-248, 249-296, and 297-334; these read HNTS…LCGN, RFNL…TVTK, ELVS…LDTF, QRKR…CDTL, VCKY…AKQL, FRII…IQTC, and KLLFEIGSLDDGISSSVISPHGRYIASIMENGSLNIYS. The region spanning 424-599 is the Rab-GAP TBC domain; it reads EFPTKYRMFI…KLFDNVFSNH (176 aa). Residues 699–951 adopt a coiled-coil conformation; it reads ELDYLRERQA…EAKKWEEAEE (253 aa). Residues 1050–1053 are mediates direct interaction with PJA2; the sequence is QAQN.

As to quaternary structure, interacts with PJA2; the interaction is direct and recruits PJA2 to centrosomes. Interacts with OFD1; regulates its activity in cilium assembly. Interacts with PRKACA.

It is found in the cytoplasm. The protein resides in the cytoskeleton. Its subcellular location is the microtubule organizing center. The protein localises to the centrosome. It localises to the centriolar satellite. It is found in the cilium basal body. In terms of biological role, molecular adapter which is involved in cilium biogenesis. Part of a functional complex including OFD1 a centriolar protein involved in cilium assembly. Could regulate the cAMP-dependent phosphorylation of OFD1, and its subsequent ubiquitination by PJA2 which ultimately leads to its proteasomal degradation. The protein is TBC1 domain family member 31 of Bos taurus (Bovine).